The following is a 236-amino-acid chain: MSTEQEPKTSPLTHLVALARDTVPPMHPAGRPFVLGAAVATLLLRRRWRGAGVLGGILTAWCAWFFREPRRTAPTRDGIAVAPADGTVAHVEKAVPPAELGLGAAPMTRVSVFLTIFDVHVQRVPLSGEVTKVSYRAGKFLSADLDKASEDNERNSMLIRGADGTEVAVVQIAGLVARRIVCSASEGDQVLAGHTYGLIRFGSRVDLYVPADSRVLVEPGQRTIGGETVIAELARA.

S203 acts as the Schiff-base intermediate with substrate; via pyruvic acid in catalysis. S203 bears the Pyruvic acid (Ser); by autocatalysis mark.

It belongs to the phosphatidylserine decarboxylase family. PSD-A subfamily. Heterodimer of a large membrane-associated beta subunit and a small pyruvoyl-containing alpha subunit. It depends on pyruvate as a cofactor. In terms of processing, is synthesized initially as an inactive proenzyme. Formation of the active enzyme involves a self-maturation process in which the active site pyruvoyl group is generated from an internal serine residue via an autocatalytic post-translational modification. Two non-identical subunits are generated from the proenzyme in this reaction, and the pyruvate is formed at the N-terminus of the alpha chain, which is derived from the carboxyl end of the proenzyme. The post-translation cleavage follows an unusual pathway, termed non-hydrolytic serinolysis, in which the side chain hydroxyl group of the serine supplies its oxygen atom to form the C-terminus of the beta chain, while the remainder of the serine residue undergoes an oxidative deamination to produce ammonia and the pyruvoyl prosthetic group on the alpha chain.

The protein localises to the cell membrane. It carries out the reaction a 1,2-diacyl-sn-glycero-3-phospho-L-serine + H(+) = a 1,2-diacyl-sn-glycero-3-phosphoethanolamine + CO2. It functions in the pathway phospholipid metabolism; phosphatidylethanolamine biosynthesis; phosphatidylethanolamine from CDP-diacylglycerol: step 2/2. In terms of biological role, catalyzes the formation of phosphatidylethanolamine (PtdEtn) from phosphatidylserine (PtdSer). This is Phosphatidylserine decarboxylase proenzyme from Saccharopolyspora erythraea (strain ATCC 11635 / DSM 40517 / JCM 4748 / NBRC 13426 / NCIMB 8594 / NRRL 2338).